The following is a 380-amino-acid chain: Beta sliding clamp (380 aa).

Belongs to the beta sliding clamp family. Forms a ring-shaped head-to-tail homodimer around DNA which binds and tethers DNA polymerases and other proteins to the DNA. The DNA replisome complex has a single clamp-loading complex (3 tau and 1 each of delta, delta', psi and chi subunits) which binds 3 Pol III cores (1 core on the leading strand and 2 on the lagging strand) each with a beta sliding clamp dimer. Additional proteins in the replisome are other copies of gamma, psi and chi, Ssb, DNA helicase and RNA primase.

It localises to the cytoplasm. Functionally, confers DNA tethering and processivity to DNA polymerases and other proteins. Acts as a clamp, forming a ring around DNA (a reaction catalyzed by the clamp-loading complex) which diffuses in an ATP-independent manner freely and bidirectionally along dsDNA. Initially characterized for its ability to contact the catalytic subunit of DNA polymerase III (Pol III), a complex, multichain enzyme responsible for most of the replicative synthesis in bacteria; Pol III exhibits 3'-5' exonuclease proofreading activity. The beta chain is required for initiation of replication as well as for processivity of DNA replication. The sequence is that of Beta sliding clamp (dnaN) from Lactococcus lactis subsp. lactis (strain IL1403) (Streptococcus lactis).